The chain runs to 205 residues: GTP cyclohydrolase-2 (205 aa).

49 to 53 contacts GTP; that stretch reads RIHSE. Zn(2+) is bound by residues cysteine 54, cysteine 65, and cysteine 67. Residues glutamine 70, 92 to 94, and threonine 114 each bind GTP; that span reads EGR. The active-site Proton acceptor is the aspartate 126. Residue arginine 128 is the Nucleophile of the active site. GTP-binding residues include threonine 149 and lysine 154.

Belongs to the GTP cyclohydrolase II family. The cofactor is Zn(2+).

The enzyme catalyses GTP + 4 H2O = 2,5-diamino-6-hydroxy-4-(5-phosphoribosylamino)-pyrimidine + formate + 2 phosphate + 3 H(+). It functions in the pathway cofactor biosynthesis; riboflavin biosynthesis; 5-amino-6-(D-ribitylamino)uracil from GTP: step 1/4. In terms of biological role, catalyzes the conversion of GTP to 2,5-diamino-6-ribosylamino-4(3H)-pyrimidinone 5'-phosphate (DARP), formate and pyrophosphate. This is GTP cyclohydrolase-2 from Shewanella piezotolerans (strain WP3 / JCM 13877).